Here is a 310-residue protein sequence, read N- to C-terminus: Protoheme IX farnesyltransferase (310 aa).

The next 9 helical transmembrane spans lie at 31-51, 52-72, 102-119, 123-145, 151-171, 179-199, 225-245, 248-268, and 281-301; these read VMSLVIFTGFVGMWLAPDSIH, PLIAGIAVICIALGAGSAGAM, ALSFGLITGFFAVFFMAL, ILASFLLLFTIFYYICIYTIWLK, NIVIGGVSGALPPVIGHAAVS, IILFLIIFIWTPPHSWAIALF, ILIYSIILFIVSLMPFFIGMN, IYLIIVCIIGLVFLYYAFSLF, and FTYSIFYLCFIFILLSSTSTI.

The protein belongs to the UbiA prenyltransferase family. Protoheme IX farnesyltransferase subfamily.

The protein resides in the cell inner membrane. The enzyme catalyses heme b + (2E,6E)-farnesyl diphosphate + H2O = Fe(II)-heme o + diphosphate. It participates in porphyrin-containing compound metabolism; heme O biosynthesis; heme O from protoheme: step 1/1. Converts heme B (protoheme IX) to heme O by substitution of the vinyl group on carbon 2 of heme B porphyrin ring with a hydroxyethyl farnesyl side group. This chain is Protoheme IX farnesyltransferase, found in Rickettsia prowazekii (strain Madrid E).